The following is a 326-amino-acid chain: Putative ribose-phosphate pyrophosphokinase 2 (326 aa).

ATP contacts are provided by residues 43–45 (DGE) and 102–103 (RQ). H136 contacts Mg(2+). Residues D225 and 229 to 233 (NTGKT) contribute to the D-ribose 5-phosphate site.

As to quaternary structure, homohexamer. It depends on Mg(2+) as a cofactor.

It localises to the cytoplasm. It catalyses the reaction D-ribose 5-phosphate + ATP = 5-phospho-alpha-D-ribose 1-diphosphate + AMP + H(+). It participates in metabolic intermediate biosynthesis; 5-phospho-alpha-D-ribose 1-diphosphate biosynthesis; 5-phospho-alpha-D-ribose 1-diphosphate from D-ribose 5-phosphate (route I): step 1/1. In terms of biological role, involved in the biosynthesis of the central metabolite phospho-alpha-D-ribosyl-1-pyrophosphate (PRPP) via the transfer of pyrophosphoryl group from ATP to 1-hydroxyl of ribose-5-phosphate (Rib-5-P). This chain is Putative ribose-phosphate pyrophosphokinase 2, found in Streptococcus pyogenes serotype M6 (strain ATCC BAA-946 / MGAS10394).